The chain runs to 176 residues: Late embryogenesis abundant protein 49 (176 aa).

SMP domains are found at residues 49–106 (TTLT…RNQK) and 115–171 (NLGD…KLNH).

This sequence belongs to the LEA type SMP family.

It localises to the cytoplasm. The protein resides in the nucleus. Functionally, LEA proteins are late embryonic proteins abundant in higher plant seed embryos. The function of those proteins is not known. This Arabidopsis thaliana (Mouse-ear cress) protein is Late embryogenesis abundant protein 49.